Reading from the N-terminus, the 513-residue chain is ATP synthase subunit alpha 1 (513 aa).

Residue 169-176 (GDRQTGKT) participates in ATP binding.

This sequence belongs to the ATPase alpha/beta chains family. In terms of assembly, F-type ATPases have 2 components, CF(1) - the catalytic core - and CF(0) - the membrane proton channel. CF(1) has five subunits: alpha(3), beta(3), gamma(1), delta(1), epsilon(1). CF(0) has three main subunits: a(1), b(2) and c(9-12). The alpha and beta chains form an alternating ring which encloses part of the gamma chain. CF(1) is attached to CF(0) by a central stalk formed by the gamma and epsilon chains, while a peripheral stalk is formed by the delta and b chains.

It localises to the cell inner membrane. The enzyme catalyses ATP + H2O + 4 H(+)(in) = ADP + phosphate + 5 H(+)(out). Its function is as follows. Produces ATP from ADP in the presence of a proton gradient across the membrane. The alpha chain is a regulatory subunit. The chain is ATP synthase subunit alpha 1 from Vibrio campbellii (strain ATCC BAA-1116).